The chain runs to 368 residues: E3 ubiquitin-protein ligase E3D (368 aa).

Ala2 carries the N-acetylalanine modification. A BRAT1-like motif motif is present at residues 129–159 (PLPSENWSALVGEWCCHPDPFANRPLHPREN). A Zn(2+)-binding site is contributed by Cys144. The interval 214 to 236 (RPSEGSFPNIPRSQFLQSIIAQC) is interaction with UBE2C. The HECT-like stretch occupies residues 332-368 (LPSATCLELLLILSRNNASLPLSLRQMNSFQVAFLKM).

Interacts with UBE2C/UbcH10 (E2 ubiquitin-conjugating enzyme). In vitro, interacts with cyclin-B. In terms of processing, ubiquitinated by UBCH10 (E2 ubiquitin-conjugating enzyme).

It is found in the cytoplasm. The enzyme catalyses S-ubiquitinyl-[E2 ubiquitin-conjugating enzyme]-L-cysteine + [acceptor protein]-L-lysine = [E2 ubiquitin-conjugating enzyme]-L-cysteine + N(6)-ubiquitinyl-[acceptor protein]-L-lysine.. It functions in the pathway protein modification; protein ubiquitination. Its function is as follows. E3 ubiquitin-protein ligase which accepts ubiquitin from specific E2 ubiquitin-conjugating enzymes, and transfers it to substrates, generally promoting their degradation by the proteasome. Independently of its E3 ubiquitin-protein ligase activity, acts as an inhibitor of CPSF3 endonuclease activity by blocking CPSF3 active site. This chain is E3 ubiquitin-protein ligase E3D (Ube3d), found in Mus musculus (Mouse).